The primary structure comprises 458 residues: UDP-N-acetylmuramate--L-alanine ligase (458 aa).

118 to 124 (GTHGKTT) is an ATP binding site.

This sequence belongs to the MurCDEF family.

It is found in the cytoplasm. The catalysed reaction is UDP-N-acetyl-alpha-D-muramate + L-alanine + ATP = UDP-N-acetyl-alpha-D-muramoyl-L-alanine + ADP + phosphate + H(+). It participates in cell wall biogenesis; peptidoglycan biosynthesis. Cell wall formation. This chain is UDP-N-acetylmuramate--L-alanine ligase, found in Clostridium botulinum (strain Kyoto / Type A2).